Reading from the N-terminus, the 103-residue chain is Protein S100-A16 (103 aa).

Positions 12 to 47 constitute an EF-hand 1; degenerate domain; it reads VIVLVENFYKYVSKYSLVKNKISKSSFREMLQKELN. Residues 54–89 form the EF-hand 2 domain; that stretch reads GNRKAADKLIQNLDANHDGRISFDEYWTLIGGITGP. Asp67, Asn69, Asp71, Arg73, and Glu78 together coordinate Ca(2+).

It belongs to the S-100 family. As to quaternary structure, homodimer. Interacts with TP53. Ubiquitous. Highly expressed in esophagus, adipose tissues and colon. Expressed at lower level in lung, brain, pancreas and skeletal muscle. Expression is up-regulated in tumors of bladder, lung, thyroid gland, pancreas and ovary. Expressed in astrocytes.

Its subcellular location is the nucleus. It localises to the nucleolus. The protein localises to the cytoplasm. Calcium-binding protein. Binds one calcium ion per monomer. Can promote differentiation of adipocytes (in vitro). Overexpression in preadipocytes increases their proliferation, enhances adipogenesis and reduces insulin-stimulated glucose uptake. This is Protein S100-A16 from Homo sapiens (Human).